The sequence spans 226 residues: MTQLLNRSLIMLLKSNIIVQDVQSYVVQFGFEAILKEAISFDKVDVVKSLNKLRAVSTTELFLASSNNALKVAEWLVETKKANVNMCSEIFKDTPLNSAARHGSYKVAEYLIAKGAAVNGYEGALLGPPLYEAVSGKYLNVAKLLLEKGAAVDQRKSGETPLHAVAKNVRYTSKDIKDDEIYKLLVSYGADTNAKVEFRRVGFSIYDGKTVSEIAEFKVALAGESE.

4 ANK repeats span residues 56-86 (VSTTELFLASSNNALKVAEWLVETKKANVNM), 91-120 (FKDTPLNSAARHGSYKVAEYLIAKGAAVNG), 125-154 (LLGPPLYEAVSGKYLNVAKLLLEKGAAVDQ), and 157-194 (SGETPLHAVAKNVRYTSKDIKDDEIYKLLVSYGADTNA).

The sequence is that of Putative ankyrin repeat protein RF_0939 from Rickettsia felis (strain ATCC VR-1525 / URRWXCal2) (Rickettsia azadi).